Consider the following 84-residue polypeptide: Cell division topological specificity factor (84 aa).

It belongs to the MinE family.

Prevents the cell division inhibition by proteins MinC and MinD at internal division sites while permitting inhibition at polar sites. This ensures cell division at the proper site by restricting the formation of a division septum at the midpoint of the long axis of the cell. The sequence is that of Cell division topological specificity factor from Burkholderia cenocepacia (strain HI2424).